An 825-amino-acid chain; its full sequence is Protein HIR1 (825 aa).

WD repeat units follow at residues 15 to 54 (QRNYEIYTVDVSSDGQRVATGGLDGKIRIWSVADILVFAK), 75 to 114 (RHTGSVTALKFSPDNKYLASGSDDKILLIWEKEEGAVQPL), 132 to 171 (AHDNDIQDICWAPDSSILVTVGLDRSIIVWNGSTFEKIKR), 174 to 213 (VHQSHVKGVVFDPANKYFATASDDRTVKVFRYHKGTDLSF), and 227 to 270 (PLTT…TSVS). A compositionally biased stretch (basic and acidic residues) spans 294–304 (HERGEEVDGAS). Residues 294 to 320 (HERGEEVDGASKDNSAASESSGKRRLK) form a disordered region. WD repeat units follow at residues 309–351 (AASE…PIFV) and 355–396 (LTSK…KAIP). The span at 574-591 (DEESMDDDAEVADEEDET) shows a compositional bias: acidic residues. The segment at 574–595 (DEESMDDDAEVADEEDETKNEH) is disordered.

This sequence belongs to the WD repeat HIR1 family.

The protein localises to the nucleus. In terms of biological role, required for replication-independent chromatin assembly and for the periodic repression of histone gene transcription during the cell cycle. This Eremothecium gossypii (strain ATCC 10895 / CBS 109.51 / FGSC 9923 / NRRL Y-1056) (Yeast) protein is Protein HIR1 (HIR1).